Here is a 322-residue protein sequence, read N- to C-terminus: 4-hydroxythreonine-4-phosphate dehydrogenase (322 aa).

Substrate is bound at residue T132. Residues H160, H205, and H260 each coordinate a divalent metal cation. Residues K268, N277, and R286 each contribute to the substrate site.

Belongs to the PdxA family. Homodimer. Zn(2+) serves as cofactor. Mg(2+) is required as a cofactor. The cofactor is Co(2+).

It is found in the cytoplasm. The enzyme catalyses 4-(phosphooxy)-L-threonine + NAD(+) = 3-amino-2-oxopropyl phosphate + CO2 + NADH. The protein operates within cofactor biosynthesis; pyridoxine 5'-phosphate biosynthesis; pyridoxine 5'-phosphate from D-erythrose 4-phosphate: step 4/5. Its function is as follows. Catalyzes the NAD(P)-dependent oxidation of 4-(phosphooxy)-L-threonine (HTP) into 2-amino-3-oxo-4-(phosphooxy)butyric acid which spontaneously decarboxylates to form 3-amino-2-oxopropyl phosphate (AHAP). In Xanthomonas oryzae pv. oryzae (strain PXO99A), this protein is 4-hydroxythreonine-4-phosphate dehydrogenase.